Here is a 548-residue protein sequence, read N- to C-terminus: Isocitrate dehydrogenase [NAD(+)] 1, mitochondrial (548 aa).

The N-terminal 53 residues, 1 to 53 (MSSLSTLRILHSTAGRRWASYYGIYPKSAACSSSSVAIARFFSTAADRPPKHA), are a transit peptide targeting the mitochondrion. Residues 132-134 (TIT) and N153 contribute to the NAD(+) site. Residues 151–157 (SPNGAMR), R187, Y194, K266, D311, and D335 contribute to the D-threo-isocitrate site. Residues D311, D335, and D339 each contribute to the Mg(2+) site. Residues 372 to 377 (HGTVSD) and N391 each bind NAD(+). The 36-residue stretch at 499–534 (IDEEAINGLFQKYDKNGDGFIDFEEFTRMLVKMNLA) folds into the EF-hand domain. Residues D512, N514, D516, F518, and E523 each contribute to the Ca(2+) site.

Belongs to the isocitrate and isopropylmalate dehydrogenases family. As to quaternary structure, homodimer. Mg(2+) is required as a cofactor. The cofactor is Mn(2+).

It is found in the mitochondrion. It catalyses the reaction D-threo-isocitrate + NAD(+) = 2-oxoglutarate + CO2 + NADH. Its activity is regulated as follows. The homodimer exhibits allosteric regulation by isocitrate. Activated by Mn(2+) and Mg(2+). No activation by Na(+), K(+) or Li(+). Inhibited by Co(2+), Cu(2+) and Ni(2+), but not with Ca(2+) in the presence of Mn(2+) or Mg(2+). Competitively inhibited by NADH, but no effect on activity by 1.0 mM citrate. Strongly inhibited by excess ATP, ADP, AMP and alpha-ketoglutarate. Functionally, performs an essential role in the oxidative function of the tricarboxylic acid cycle and respiration. Catalyzes the decarboxylation of isocitrate to produce 2-oxoglutarate and generate NADH to provide electrons for energy production. No activity with NADP(+). The sequence is that of Isocitrate dehydrogenase [NAD(+)] 1, mitochondrial from Phaeodactylum tricornutum (strain CCAP 1055/1).